A 502-amino-acid polypeptide reads, in one-letter code: Glutamate--tRNA ligase (502 aa).

The 'HIGH' region motif lies at 12–22 (PSPTGYLHVGG). The 'KMSKS' region signature appears at 259–263 (KLSKR). Lys-262 contacts ATP.

Belongs to the class-I aminoacyl-tRNA synthetase family. Glutamate--tRNA ligase type 1 subfamily. Monomer.

The protein localises to the cytoplasm. The catalysed reaction is tRNA(Glu) + L-glutamate + ATP = L-glutamyl-tRNA(Glu) + AMP + diphosphate. In terms of biological role, catalyzes the attachment of glutamate to tRNA(Glu) in a two-step reaction: glutamate is first activated by ATP to form Glu-AMP and then transferred to the acceptor end of tRNA(Glu). This chain is Glutamate--tRNA ligase, found in Chlorobium phaeobacteroides (strain DSM 266 / SMG 266 / 2430).